The following is a 256-amino-acid chain: 5-keto-4-deoxy-D-glucarate aldolase (256 aa).

H50 serves as the catalytic Proton acceptor. Q151 is a binding site for substrate. E153 is a Mg(2+) binding site. Residues S178 and D179 each coordinate substrate. Residue D179 coordinates Mg(2+).

This sequence belongs to the HpcH/HpaI aldolase family. KDGluc aldolase subfamily. Homohexamer; trimer of dimers. It depends on Mg(2+) as a cofactor.

It catalyses the reaction 5-dehydro-4-deoxy-D-glucarate = 2-hydroxy-3-oxopropanoate + pyruvate. It carries out the reaction 2-dehydro-3-deoxy-D-glucarate = 2-hydroxy-3-oxopropanoate + pyruvate. It functions in the pathway carbohydrate acid metabolism; galactarate degradation; D-glycerate from galactarate: step 2/3. Catalyzes the reversible retro-aldol cleavage of both 5-keto-4-deoxy-D-glucarate and 2-keto-3-deoxy-D-glucarate to pyruvate and tartronic semialdehyde. This is 5-keto-4-deoxy-D-glucarate aldolase from Escherichia coli (strain K12 / DH10B).